Here is a 124-residue protein sequence, read N- to C-terminus: MATINQLVRKPRVKQVVKSNVPALAACPQKRGVCTRVYTTTPKKPNSALRKVCRVRLTNGFEVTSYIGGEGHNLQEHSVVLIRGGRVKDLPGVRYHTVRGALDCAGVNGRKKGRSKYGVKRPKS.

3-methylthioaspartic acid is present on Asp-89.

Belongs to the universal ribosomal protein uS12 family. Part of the 30S ribosomal subunit. Contacts proteins S8 and S17. May interact with IF1 in the 30S initiation complex.

In terms of biological role, with S4 and S5 plays an important role in translational accuracy. Functionally, interacts with and stabilizes bases of the 16S rRNA that are involved in tRNA selection in the A site and with the mRNA backbone. Located at the interface of the 30S and 50S subunits, it traverses the body of the 30S subunit contacting proteins on the other side and probably holding the rRNA structure together. The combined cluster of proteins S8, S12 and S17 appears to hold together the shoulder and platform of the 30S subunit. The protein is Small ribosomal subunit protein uS12 of Photobacterium profundum (strain SS9).